We begin with the raw amino-acid sequence, 190 residues long: Potassium-transporting ATPase KdpC subunit (190 aa).

Residues threonine 10–glycine 30 form a helical membrane-spanning segment.

The protein belongs to the KdpC family. The system is composed of three essential subunits: KdpA, KdpB and KdpC.

The protein localises to the cell inner membrane. Functionally, part of the high-affinity ATP-driven potassium transport (or Kdp) system, which catalyzes the hydrolysis of ATP coupled with the electrogenic transport of potassium into the cytoplasm. This subunit acts as a catalytic chaperone that increases the ATP-binding affinity of the ATP-hydrolyzing subunit KdpB by the formation of a transient KdpB/KdpC/ATP ternary complex. This chain is Potassium-transporting ATPase KdpC subunit, found in Shigella dysenteriae serotype 1 (strain Sd197).